A 427-amino-acid polypeptide reads, in one-letter code: Actin-related protein 3 (427 aa).

The protein belongs to the actin family. ARP3 subfamily. As to quaternary structure, component of the Arp2/3 complex composed of arp2, act2, arc1/p41-ARC, arc2/p34-ARC, arc3/p21-ARC, arc4/p20-ARC and arc5/p16-ARC.

The protein resides in the cytoplasm. The protein localises to the cytoskeleton. It localises to the actin patch. In terms of biological role, functions as ATP-binding component of the Arp2/3 complex which is involved in regulation of actin polymerization and together with an activating nucleation-promoting factor (NPF) mediates the formation of branched actin networks. Seems to contact the pointed end of the daughter actin filament. May be involved in cytokinesis. The chain is Actin-related protein 3 (act2) from Schizosaccharomyces pombe (strain 972 / ATCC 24843) (Fission yeast).